A 140-amino-acid polypeptide reads, in one-letter code: Pro-vaccinia growth factor (140 aa).

Positions 1–18 (MSMKYLMLLFAAMIIRSF) are cleaved as a signal peptide. Residues 19 to 100 (ADSGNAIETT…SENPNTTTSY (82 aa)) lie on the Extracellular side of the membrane. N-linked (GlcNAc...) asparagine; by host glycosylation is present at asparagine 34. One can recognise an EGF-like domain in the interval 41-81 (AIRLCGPEGDGYCLHGDCIHARDIDGMYCRCSHGYTGIRCQ). 3 cysteine pairs are disulfide-bonded: cysteine 45-cysteine 58, cysteine 53-cysteine 69, and cysteine 71-cysteine 80. The N-linked (GlcNAc...) asparagine; by host glycan is linked to asparagine 95. The helical transmembrane segment at 101-121 (IPSPGIVLVLVGIIIITCCSL) threads the bilayer. Residues 122-140 (SVYRFTRRTKLPIQDMVVP) lie on the Cytoplasmic side of the membrane.

This sequence belongs to the orthopoxvirus OPG019 family. As to quaternary structure, vaccinia growth factor interacts with host EGFR and promotes EGFR dimerization.

The protein resides in the host membrane. It localises to the secreted. In terms of biological role, stimulates cellular proliferation (hyperplasia)and mobility around infected cells to promote rapid and efficient spread of infection. This effect is beneficial for virus replication in vivo, because poxviruses replicate possibly better in proliferating cells than in quiescent cells. Acts by binding host EGFR, inducing its dimerization, autophosphorylation and leading to activation of several cellular pathways regulating cell proliferation or cell survival. The activation by host EGFR of mitogen activated protein kinases (MAPK) and extracellular-signal regulated kinases (ERK) are essential for the positive effect of vaccinia growth factor on poxvirus virulence in vivo. The sequence is that of Pro-vaccinia growth factor (OPG019) from Vaccinia virus (strain L-IVP) (VACV).